The sequence spans 301 residues: Probable alpha-L-glutamate ligase 2 (301 aa).

An ATP-grasp domain is found at 104–287 (MQLLSRKGIG…VASMIIEFIV (184 aa)). ATP is bound by residues lysine 141, 178 to 179 (EY), aspartate 187, and 211 to 213 (RSN). Mg(2+) is bound by residues aspartate 248, glutamate 260, and asparagine 262. 3 residues coordinate Mn(2+): aspartate 248, glutamate 260, and asparagine 262.

Belongs to the RimK family. Requires Mg(2+) as cofactor. The cofactor is Mn(2+).

In Pseudoalteromonas atlantica (strain T6c / ATCC BAA-1087), this protein is Probable alpha-L-glutamate ligase 2.